Reading from the N-terminus, the 1006-residue chain is SGGFDFSFLPQPPQEKAGVGLGPGPMGLMGPRGPPGASGAPGPQGFQGPAGEPGEPGQTGPAGARGVVGPQGARGFPGTPGLPGFKGIRGYNGLDGLKGQPGAAGVKGEPGAPGENGTPGQTGARGLPGERGRVGAPGPAGSRGSDGSVGPVGPAGPIGSAGPPGFPGAPGPKGELGPVGNTGPSGPAGPRGEQGLPGVSGPVGPPGNPGANGLTGAKGAAGLPGVAGAPGLPGPRGIPGPVGASGATGARGLVGEPGPAGSKGESGGKGEPGSAGPQGPPGSSGEEGKRGPSGESGSTGPTGPPGLRGGPGSRGLPGADGRAGVIGPAGARGASGPAGVRGPSGDTGRPGEPGLMGARGLPGSPGNVGPAGKEGPAGLPGIDGRPGPIGPAGARGEAGNIGFPGPKGPAGDPGKGGEKGHAGLAGNRGAPGPDGNNGAQGPPGLQGVQGGKGEQGPAGPPGFQGLPGPAGTTGEAGKPGERGIPGEFGLPGPAGPRGERGPPGESGAVGPSGAIGSRGPSGPPGPDGNKGEPGVVGAPGTAGPAGSGGLPGERGAAGIPGGKGEKGETGLRGEVGTTGRGAPGAVGAPGPAGATGDRGEAGAAGPAGPAGPRGSPGERGEVGPAGPNGFAGPAGAAGQPGAKGERGTKGPKGENGIVGPTGPVGSAGPAGPNGPAGPAGSRGDGGPPGVTGFPGAAGRTGPPGPSGITGPPGPPGAAGKEGLRGPRGDQGPVGRTGETGAGGPPGFTGEKGPSGEPGTAGPPGTAGPQGLLGAPGILGLPGSRGERGLPGVAGAVGEPGPLGIGPPGARGGRDGNPGSDGPPGRDGLPGHKGERGYAGNPGPVGAAGAPGPHGAVGPAGKHGNRGEPGPVGSAGPVGALGPRGPSGPQGIRGDKGEAGDKGPRGLPGLKGHNGLQGLPGLAGQHGDQGAPGAVGPAGPRGPSGPSGPPGKDGRTGHPGAVGPAGIRGSQGSQGPSGPPGPPGPPGPPGASGGGYDFGYEGDFYRA.

The disordered stretch occupies residues 1–84; that stretch reads SGGFDFSFLP…GFPGTPGLPG (84 aa). Residues proline 10, proline 13, proline 35, and proline 41 each carry the 4-hydroxyproline modification. Residues 28 to 64 are compositionally biased toward low complexity; that stretch reads LMGPRGPPGASGAPGPQGFQGPAGEPGEPGQTGPAGA. Lysine 86 bears the 5-hydroxylysine; alternate mark. Lysine 86 carries O-linked (Gal...) hydroxylysine; alternate glycosylation. A disordered region spans residues 99-1006; sequence GQPGAAGVKG…FGYEGDFYRA (908 aa). Low complexity-rich tracts occupy residues 142-163 and 209-230; these read SRGS…SAGP and PGAN…AGAP. Gly residues predominate over residues 264 to 273; that stretch reads GESGGKGEPG. Residues 274–284 show a composition bias toward low complexity; the sequence is SAGPQGPPGSS. The segment covering 306–315 has biased composition (gly residues); that stretch reads GLRGGPGSRG. Residues 328-344 are compositionally biased toward low complexity; the sequence is PAGARGASGPAGVRGPS. 4-hydroxyproline occurs at positions 350 and 353. The span at 379 to 398 shows a compositional bias: low complexity; sequence LPGIDGRPGPIGPAGARGEA. The span at 447-456 shows a compositional bias: gly residues; sequence GVQGGKGEQG. 2 stretches are compositionally biased toward low complexity: residues 503–520 and 532–542; these read PGES…SRGP and EPGVVGAPGTA. Over residues 543–552 the composition is skewed to gly residues; it reads GPAGSGGLPG. Composition is skewed to low complexity over residues 585–615 and 622–642; these read AVGA…PRGS and VGPA…QPGA. The segment covering 643–652 has biased composition (basic and acidic residues); it reads KGERGTKGPK. The span at 660–670 shows a compositional bias: low complexity; the sequence is PTGPVGSAGPA. The span at 680–689 shows a compositional bias: gly residues; the sequence is GSRGDGGPPG. The segment covering 691-700 has biased composition (low complexity); it reads TGFPGAAGRT. Gly residues predominate over residues 737 to 746; the sequence is GETGAGGPPG. 2 stretches are compositionally biased toward low complexity: residues 754 to 781 and 789 to 799; these read SGEP…LGLP and LPGVAGAVGEP. A compositionally biased stretch (gly residues) spans 800-810; the sequence is GPLGIGPPGAR. Positions 837–882 are enriched in low complexity; sequence YAGNPGPVGAAGAPGPHGAVGPAGKHGNRGEPGPVGSAGPVGALGP. The segment covering 892 to 903 has biased composition (basic and acidic residues); it reads RGDKGEAGDKGP. The span at 976 to 988 shows a compositional bias: pro residues; sequence SGPPGPPGPPGPP.

It belongs to the fibrillar collagen family. Trimers of one alpha 2(I) and two alpha 1(I) chains. Interacts (via C-terminus) with TMEM131 (via PapD-L domain); the interaction is direct and is involved in assembly and TRAPPIII ER-to-Golgi transport complex-dependent secretion of collagen. Prolines at the third position of the tripeptide repeating unit (G-X-Y) are hydroxylated in some or all of the chains. As to expression, expressed in bones.

It localises to the secreted. Its subcellular location is the extracellular space. The protein resides in the extracellular matrix. Type I collagen is a member of group I collagen (fibrillar forming collagen). This chain is Collagen alpha-2(I) chain, found in Choloepus hoffmanni (Hoffmann's two-fingered sloth).